Reading from the N-terminus, the 266-residue chain is Tryptophan synthase alpha chain (266 aa).

Catalysis depends on proton acceptor residues glutamate 47 and aspartate 58.

Belongs to the TrpA family. Tetramer of two alpha and two beta chains.

The protein localises to the plastid. Its subcellular location is the chloroplast. It carries out the reaction (1S,2R)-1-C-(indol-3-yl)glycerol 3-phosphate + L-serine = D-glyceraldehyde 3-phosphate + L-tryptophan + H2O. The protein operates within amino-acid biosynthesis; L-tryptophan biosynthesis; L-tryptophan from chorismate: step 5/5. The alpha subunit is responsible for the aldol cleavage of indoleglycerol phosphate to indole and glyceraldehyde 3-phosphate. This Cyanidium caldarium (Red alga) protein is Tryptophan synthase alpha chain.